A 572-amino-acid polypeptide reads, in one-letter code: Proline--tRNA ligase (572 aa).

The protein belongs to the class-II aminoacyl-tRNA synthetase family. ProS type 1 subfamily. As to quaternary structure, homodimer.

It is found in the cytoplasm. The catalysed reaction is tRNA(Pro) + L-proline + ATP = L-prolyl-tRNA(Pro) + AMP + diphosphate. Functionally, catalyzes the attachment of proline to tRNA(Pro) in a two-step reaction: proline is first activated by ATP to form Pro-AMP and then transferred to the acceptor end of tRNA(Pro). As ProRS can inadvertently accommodate and process non-cognate amino acids such as alanine and cysteine, to avoid such errors it has two additional distinct editing activities against alanine. One activity is designated as 'pretransfer' editing and involves the tRNA(Pro)-independent hydrolysis of activated Ala-AMP. The other activity is designated 'posttransfer' editing and involves deacylation of mischarged Ala-tRNA(Pro). The misacylated Cys-tRNA(Pro) is not edited by ProRS. The protein is Proline--tRNA ligase of Edwardsiella ictaluri (strain 93-146).